The chain runs to 337 residues: Cytoskeleton protein RodZ (337 aa).

Residues 1-111 (MNTEATHDQN…LGKRRKKRDG (111 aa)) are Cytoplasmic-facing. Positions 19–71 (LRNAREQLGLSQQAVAERLCLKVSTVRDIEEDKAPADLASTFLRGYIRSYARL) constitute an HTH cro/C1-type domain. A DNA-binding region (H-T-H motif) is located at residues 30–49 (QQAVAERLCLKVSTVRDIEE). The helical; Signal-anchor for type II membrane protein transmembrane segment at 112–132 (WLMTFTWLVLFVVIGLSGAWW) threads the bilayer. Residues 133–337 (WQDHKAQQEE…TLNAEQSPAQ (205 aa)) are Periplasmic-facing. Residues 145–167 (TMADQSSAELSSNSEQGQSVPLN) are compositionally biased toward polar residues. The tract at residues 145 to 236 (TMADQSSAEL…TAATTPDGAA (92 aa)) is disordered. Low complexity predominate over residues 168–207 (TSTTTDPATTSTPPASVDTTATNTQTPAVTAPAPAVDPQQ). Polar residues predominate over residues 208 to 218 (NAVVSPSQANV). Over residues 219 to 236 (DTAATPAPTAATTPDGAA) the composition is skewed to low complexity.

This sequence belongs to the RodZ family.

It localises to the cell inner membrane. Its function is as follows. Cytoskeletal protein that is involved in cell-shape control through regulation of the length of the long axis. The polypeptide is Cytoskeleton protein RodZ (Escherichia coli O9:H4 (strain HS)).